The primary structure comprises 251 residues: MWDQKWVIGNWKMNGRLQNNNSLMHRFRILPTAERVLIGLAAPTVYLLQLHNAMQIVLNNRILTCAQDVSRFPDNGAYTGEVSAEMLADTGTDIVLIGHSERSLYFGEKNEIQRRKMENVLNVGLIPLLCVGESLEEREAGKEHEVIAHQLSILQGLDTKNIAVAYEPVWAIGTGKVATVEQIADMHAFIYKEILSLCGSDVKIRVLYGGSVKADNAADIFAVPYVDGALVGGASLSYDSFTAIISAAQNA.

10–12 (NWK) provides a ligand contact to substrate. The active-site Electrophile is histidine 99. Glutamate 167 serves as the catalytic Proton acceptor. Substrate-binding positions include glycine 173, serine 211, and 232–233 (GG).

The protein belongs to the triosephosphate isomerase family. As to quaternary structure, homodimer.

The protein localises to the cytoplasm. It carries out the reaction D-glyceraldehyde 3-phosphate = dihydroxyacetone phosphate. Its pathway is carbohydrate biosynthesis; gluconeogenesis. The protein operates within carbohydrate degradation; glycolysis; D-glyceraldehyde 3-phosphate from glycerone phosphate: step 1/1. Functionally, involved in the gluconeogenesis. Catalyzes stereospecifically the conversion of dihydroxyacetone phosphate (DHAP) to D-glyceraldehyde-3-phosphate (G3P). The protein is Triosephosphate isomerase of Neisseria meningitidis serogroup A / serotype 4A (strain DSM 15465 / Z2491).